Here is a 324-residue protein sequence, read N- to C-terminus: Alkanal monooxygenase beta chain (324 aa).

This sequence belongs to the bacterial luciferase oxidoreductase family. In terms of assembly, heterodimer of an alpha and a beta chain.

It carries out the reaction a long-chain fatty aldehyde + FMNH2 + O2 = a long-chain fatty acid + hnu + FMN + H2O + 2 H(+). Light-emitting reaction in luminous bacteria. The specific role of the beta subunit is unknown, but it is absolutely required for bioluminescence activity. This Vibrio harveyi (Beneckea harveyi) protein is Alkanal monooxygenase beta chain (luxB).